The following is a 233-amino-acid chain: Putative T-box protein 41 (233 aa).

The T-box DNA-binding region spans 1-146; it reads MTVTRNGCRI…MNPHARHFLK (146 aa).

The protein resides in the nucleus. The chain is Putative T-box protein 41 (tbx-41) from Caenorhabditis elegans.